A 632-amino-acid polypeptide reads, in one-letter code: MAU2 chromatid cohesion factor homolog (632 aa).

TPR repeat units lie at residues 453 to 486 (GGFYYVQGLHAFHKNSFHEAKRFLRETLKMANAE) and 493 to 526 (SCSLVLLSHVFLSIGNSKESMNMVTPAMQLASKI).

It belongs to the SCC4/mau-2 family. As to quaternary structure, interacts with Nipped-B to form the cohesin loading complex.

The protein localises to the nucleus. It is found in the nucleoplasm. Functionally, required for association of the cohesin complex with chromatin during interphase. Plays a role in sister chromatid cohesion and normal progression through prometaphase. The protein is MAU2 chromatid cohesion factor homolog of Drosophila yakuba (Fruit fly).